A 51-amino-acid chain; its full sequence is Ovomucoid (51 aa).

One can recognise a Kazal-like domain in the interval 3 to 51 (VDCSGYPKPACTLEYFPLCGSDNQTYANKCTFCNAVVEKNVTLNHLGEC). Disulfide bonds link Cys-5–Cys-35, Cys-13–Cys-32, and Cys-21–Cys-51. Asn-42 is a glycosylation site (N-linked (GlcNAc...) asparagine).

It is found in the secreted. The protein is Ovomucoid of Nothoprocta perdicaria (Chilean tinamou).